Here is a 762-residue protein sequence, read N- to C-terminus: Alpha-xylosidase XylQ (762 aa).

Residue Asp-414 is the Nucleophile of the active site. The active site involves Glu-417.

This sequence belongs to the glycosyl hydrolase 31 family.

The protein resides in the cell membrane. It catalyses the reaction Hydrolysis of terminal, non-reducing alpha-D-xylose residues with release of alpha-D-xylose.. Its function is as follows. Involved in the metabolism of isoprimeverose. Hydrolyzes isoprimeverose into equimolar amounts of glucose and xylose. In vitro, can also use p-nitrophenyl-alpha-D-xylopyranoside (alpha-p-NPX). This Lactiplantibacillus pentosus (Lactobacillus pentosus) protein is Alpha-xylosidase XylQ.